The following is a 359-amino-acid chain: MASNLPQERNHEACLLIRDLDPMVTESLLMELFIQAAPVVKVFIPKDKLTQQHSGRAYVEFQSSSDAEYALKVMKFVRLFNKEIKIKKENKDKVDIGANLFIGNLDADVDERILHDTFSRFGTIIFTPKVMRDENGVSKGFAFINFDSFEASDAAIEAMNSQFLCNKPISVTYARKKDSNERHGSSAERIIAASRNTGYLNQQQQQQSSSTSSTSTISTSTPQQQQQQQSQPLPPPIVTAGGIIHQQQIQQQQQLQQQQQQQLQLQQLQLQQLQQQQQQQQQQQQQQQQQQQQQQQQQQQQQHHPHHQHPIPHPHPLPHQLRPHPHPHHPPPPPFNPMLMQFNPMMMPFGGMPPPPPHK.

RRM domains follow at residues 13–91 (ACLL…KENK) and 98–176 (ANLF…YARK). 2 disordered regions span residues 198–239 (GYLN…PIVT) and 293–337 (QQQQ…PFNP). Composition is skewed to low complexity over residues 202-231 (QQQQ…QQSQ) and 293-302 (QQQQQQQQQQ). The segment covering 303-312 (HHPHHQHPIP) has biased composition (basic residues).

Belongs to the SF3B4 family. Component of splicing factor SF3B which is composed of at least eight subunits.

It localises to the nucleus. Functionally, subunit of the splicing factor SF3B required for 'A' complex assembly formed by the stable binding of U2 snRNP to the branchpoint sequence (BPS) in pre-mRNA. Sequence independent binding of SF3A/SF3B complex upstream of the branch site is essential, it may anchor U2 snRNP to the pre-mRNA. May also be involved in the assembly of the 'E' complex. Has been found in complex 'B' and 'C' as well. In Dictyostelium discoideum (Social amoeba), this protein is Splicing factor 3B subunit 4 (sf3b4).